Consider the following 144-residue polypeptide: Large ribosomal subunit protein uL15 (144 aa).

Positions 1–53 (MRLNTLSPAEGAKHSAKRLGRGIGSGLGKTGGRGHKGQKSRTGGGVRRGFEGG) are disordered. Residues 21-31 (RGIGSGLGKTG) are compositionally biased toward gly residues.

This sequence belongs to the universal ribosomal protein uL15 family. As to quaternary structure, part of the 50S ribosomal subunit.

In terms of biological role, binds to the 23S rRNA. The polypeptide is Large ribosomal subunit protein uL15 (Pasteurella multocida (strain Pm70)).